A 189-amino-acid chain; its full sequence is Auxin-responsive protein IAA3 (189 aa).

The EAR-like (transcriptional repression) signature appears at 12–16; the sequence is LRLGL. Positions 42 to 65 are disordered; sequence TDTEKEIESSSRKTETSPPRKAQI. The span at 43–56 shows a compositional bias: basic and acidic residues; it reads DTEKEIESSSRKTE. The 88-residue stretch at 92-179 folds into the PB1 domain; the sequence is GIYVKVSMDG…TCKRLRIMKG (88 aa).

Belongs to the Aux/IAA family. Homodimers and heterodimers. Interacts with TPL. Interacts with TIR1, the F-box component of the Skp1-Cdc53/cullin-F-box (SCFTIR1) E3 ubiquitin ligase complex. Phosphorylated by phytochrome A in vitro. In terms of tissue distribution, highly expressed in stems and flowers. Expressed in hypocotyls, cotyledons and leaves, but barely detected in roots. Expressed in root tips. In the root meristem, specifically detected at the vascular tissue transition zone.

Its subcellular location is the nucleus. In terms of biological role, aux/IAA proteins are short-lived transcriptional factors that function as repressors of early auxin response genes at low auxin concentrations. Repression is thought to result from the interaction with auxin response factors (ARFs), proteins that bind to the auxin-responsive promoter element (AuxRE). Plays a central role in auxin regulation of root growth, in gravitropism, and in lateral root formation. Regulated by an auxin-induced protein turnover. Formation of heterodimers with ARF proteins may alter their ability to modulate early auxin response genes expression. When activated by cytokinin, restricts the expression of the PIN genes to the vascular transition zone. Induction of SHY2 in the vascular transition zone restricts BRX expression to down-regulate PIN3 and thus limit meristem growth, but proper SHY2 expression requires BRX. Involved in meristem growth and in determining its size. May participate in strigolactone signaling to regulate meristem size and lateral root formation. The chain is Auxin-responsive protein IAA3 (IAA3) from Arabidopsis thaliana (Mouse-ear cress).